The primary structure comprises 498 residues: Protein WHAT'S THIS FACTOR 1, chloroplastic (498 aa).

The N-terminal 50 residues, M1–V50, are a transit peptide targeting the chloroplast. The PORR domain maps to K59 to A387. Disordered stretches follow at residues V397 to G427 and D446 to W498. 2 stretches are compositionally biased toward acidic residues: residues S417–G427 and E456–D466.

Its subcellular location is the plastid. It localises to the chloroplast. RNA-binding protein involved in the chloroplastic group II intron splicing. Binds specific group II introns and promotes their splicing. Functions in the context of a heterodimer with the ribonuclease III domain-containing protein RNC1. The polypeptide is Protein WHAT'S THIS FACTOR 1, chloroplastic (Zea mays (Maize)).